We begin with the raw amino-acid sequence, 381 residues long: Odorant receptor 46a, isoform A (381 aa).

The Cytoplasmic segment spans residues 1 to 37; it reads MSKGVEIFYKGQKAFLNILSLWPQIERRWRIIHQVNY. The helical transmembrane segment at 38–58 threads the bilayer; sequence VHVIVFWVLLFDLLLVLHVMA. N-linked (GlcNAc...) asparagine glycosylation is present at asparagine 59. Topologically, residues 59 to 65 are extracellular; that stretch reads NLSYMSE. The chain crosses the membrane as a helical span at residues 66 to 86; that stretch reads VVKAIFILATSAGHTTKLLSI. The Cytoplasmic portion of the chain corresponds to 87–127; the sequence is KANNVQMEELFRRLDNEEFRPRGANEELIFAAACERSRKLR. A helical membrane pass occupies residues 128 to 148; it reads DFYGALSFAALSMILIPQFAL. The Extracellular segment spans residues 149–170; it reads DWSHLPLKTYNPLGENTGSPAY. Residues 171–191 traverse the membrane as a helical segment; the sequence is WLLYCYQCLALSVSCITNIGF. The Cytoplasmic segment spans residues 192-255; that stretch reads DSLCSSLFIF…KTVERLLCKP (64 aa). A helical transmembrane segment spans residues 256–276; that stretch reads ISVQIFCSVLVLTANFYAIAV. Topologically, residues 277–287 are extracellular; sequence LSDERLELFKY. Residues 288-308 traverse the membrane as a helical segment; that stretch reads VTYQACMLIQIFILCYYAGEV. The Cytoplasmic portion of the chain corresponds to 309–355; the sequence is TQRSLDLPHELYKTSWVDWDYRSRRIALLFMQRLHSTLRIRTLNPSL. A helical membrane pass occupies residues 356 to 376; sequence GFDLMLFSSIVNCSYSYFALL. Over 377–381 the chain is Extracellular; it reads KRVNS.

The protein belongs to the insect chemoreceptor superfamily. Heteromeric odorant receptor channel (TC 1.A.69) family. Or2a subfamily. Interacts with Orco. Complexes exist early in the endomembrane system in olfactory sensory neurons (OSNs), coupling these complexes to the conserved ciliary trafficking pathway. Isoform A is expressed in a subset of 17 olfactory receptor neurons in the maxillary palp.

The protein localises to the cell membrane. Odorant receptor which mediates acceptance or avoidance behavior, depending on its substrates. The odorant receptor repertoire encodes a large collection of odor stimuli that vary widely in identity, intensity, and duration. May form a complex with Orco to form odorant-sensing units, providing sensitive and prolonged odorant signaling and calcium permeability. The polypeptide is Odorant receptor 46a, isoform A (Or46a) (Drosophila melanogaster (Fruit fly)).